The following is a 618-amino-acid chain: Proline--tRNA ligase (618 aa).

The protein belongs to the class-II aminoacyl-tRNA synthetase family. ProS type 1 subfamily. In terms of assembly, homodimer.

It is found in the cytoplasm. It carries out the reaction tRNA(Pro) + L-proline + ATP = L-prolyl-tRNA(Pro) + AMP + diphosphate. Its function is as follows. Catalyzes the attachment of proline to tRNA(Pro) in a two-step reaction: proline is first activated by ATP to form Pro-AMP and then transferred to the acceptor end of tRNA(Pro). As ProRS can inadvertently accommodate and process non-cognate amino acids such as alanine and cysteine, to avoid such errors it has two additional distinct editing activities against alanine. One activity is designated as 'pretransfer' editing and involves the tRNA(Pro)-independent hydrolysis of activated Ala-AMP. The other activity is designated 'posttransfer' editing and involves deacylation of mischarged Ala-tRNA(Pro). The misacylated Cys-tRNA(Pro) is not edited by ProRS. This chain is Proline--tRNA ligase, found in Streptococcus pyogenes serotype M18 (strain MGAS8232).